Here is a 1561-residue protein sequence, read N- to C-terminus: Synemin (1561 aa).

The head stretch occupies residues 1–10; the sequence is MLSWRLQTGS. A coil 1A region spans residues 11-49; the sequence is EKAELQELNARLYDYVCRVRELERENLLLEEELRSRLSR. The interval 11-320 is interaction with DMD and UTRN; the sequence is EKAELQELNA…YRALLEGESN (310 aa). The 312-residue stretch at 11–322 folds into the IF rod domain; the sequence is EKAELQELNA…ALLEGESNPE (312 aa). The segment at 50–58 is linker 1; sequence EDRWAEDQA. The coil 1B stretch occupies residues 59 to 163; the sequence is LYAEEARSLR…DLRARAASLT (105 aa). Residues 164-186 are linker 12; it reads MHFRARATSPAAPPPRLRDVHDS. The coil 2 stretch occupies residues 187-300; it reads YALLVAESWR…LRDYQELLQV (114 aa). The tract at residues 301 to 1561 is tail; the sequence is KTGLSLEVAT…EEEEEGEGWF (1261 aa). Polar residues-rich tracts occupy residues 371–390 and 401–421; these read SSAS…TTAV and SRHS…KTIS. 3 disordered regions span residues 371 to 421, 549 to 574, and 591 to 637; these read SSAS…KTIS, DARK…RSVK, and EVST…DSTT. Residues 601 to 624 show a composition bias toward basic and acidic residues; it reads GRKDVSHSGGREAETKETRFRLDT. Polar residues predominate over residues 625-637; it reads QDTASSLQSDSTT. Phosphothreonine is present on threonine 653. Serine 655, serine 778, serine 780, serine 1044, serine 1049, serine 1077, serine 1087, serine 1179, and serine 1182 each carry phosphoserine. 2 disordered regions span residues 1033-1061 and 1075-1099; these read SVVR…VPAG and SPSG…QGPV. Over residues 1086 to 1099 the composition is skewed to polar residues; that stretch reads VSPSSDQRVTQGPV. Positions 1152-1453 are interaction with TLN1 and VCL; sequence VSGDFSEAVS…GPKETSFTFQ (302 aa). The tract at residues 1212-1231 is disordered; sequence ADISGSGRMPGSERSHTEKE. A compositionally biased stretch (basic and acidic residues) spans 1222–1231; sequence GSERSHTEKE. Residues 1242-1557 form an interaction with DMD and UTRN region; sequence AQVGGNFATE…DNEEEEEEEG (316 aa). Residue serine 1425 is modified to Phosphoserine. At arginine 1481 the chain carries Omega-N-methylarginine. Residues 1491–1519 form a disordered region; it reads DERVASTGSGASPGDAHQAPGEKGTEQAG.

It belongs to the intermediate filament family. As to quaternary structure, interacts with DES, DMD, DTNA, TLN1, UTRN and VCL. Isoform 1 and isoform 2 interact with GFAP and VIM. In terms of tissue distribution, isoform 2 and isoform 3 are detected in adult skeletal muscle, heart and bladder, whereas isoform 1 is only detected in adult bladder (at protein level).

The protein resides in the cytoplasm. It is found in the cytoskeleton. It localises to the cell junction. The protein localises to the adherens junction. Its function is as follows. Type-VI intermediate filament (IF) which plays an important cytoskeletal role within the muscle cell cytoskeleton. It forms heteromeric IFs with desmin and/or vimentin, and via its interaction with cytoskeletal proteins alpha-dystrobrevin, dystrophin, talin-1, utrophin and vinculin, is able to link these heteromeric IFs to adherens-type junctions, such as to the costameres, neuromuscular junctions, and myotendinous junctions within striated muscle cells. The chain is Synemin from Mus musculus (Mouse).